The following is a 456-amino-acid chain: tRNA-2-methylthio-N(6)-dimethylallyladenosine synthase (456 aa).

Residues 17–135 (KLYLIQSFGC…LPRMIHQVQE (119 aa)) form the MTTase N-terminal domain. [4Fe-4S] cluster contacts are provided by C26, C62, C96, C172, C176, and C179. The 230-residue stretch at 158-387 (RKDKLKAWVT…IELQNLISLE (230 aa)) folds into the Radical SAM core domain. Positions 390-453 (QREEGRVLEV…PNLLEGEVVP (64 aa)) constitute a TRAM domain.

Belongs to the methylthiotransferase family. MiaB subfamily. As to quaternary structure, monomer. [4Fe-4S] cluster is required as a cofactor.

It is found in the cytoplasm. It carries out the reaction N(6)-dimethylallyladenosine(37) in tRNA + (sulfur carrier)-SH + AH2 + 2 S-adenosyl-L-methionine = 2-methylsulfanyl-N(6)-dimethylallyladenosine(37) in tRNA + (sulfur carrier)-H + 5'-deoxyadenosine + L-methionine + A + S-adenosyl-L-homocysteine + 2 H(+). Functionally, catalyzes the methylthiolation of N6-(dimethylallyl)adenosine (i(6)A), leading to the formation of 2-methylthio-N6-(dimethylallyl)adenosine (ms(2)i(6)A) at position 37 in tRNAs that read codons beginning with uridine. The protein is tRNA-2-methylthio-N(6)-dimethylallyladenosine synthase of Desulforamulus reducens (strain ATCC BAA-1160 / DSM 100696 / MI-1) (Desulfotomaculum reducens).